A 144-amino-acid polypeptide reads, in one-letter code: Intraflagellar transport protein 25 homolog (144 aa).

Asn-29, Asp-32, and Thr-37 together coordinate Ca(2+).

It belongs to the IFT25 family. As to quaternary structure, component of the IFT complex B, at least composed of IFT20, IFT22, IFT25, IFT27, IFT46, IFT52, TRAF3IP1/IFT54, IFT57, IFT74, IFT80, IFT81, and IFT88. Interacts with IFT27. Interacts with IFT88. In terms of tissue distribution, detected in placenta.

It localises to the cell projection. It is found in the cilium. Component of the IFT complex B required for sonic hedgehog/SHH signaling. May mediate transport of SHH components: required for the export of SMO and PTCH1 receptors out of the cilium and the accumulation of GLI2 at the ciliary tip in response to activation of the SHH pathway, suggesting it is involved in the dynamic transport of SHH signaling molecules within the cilium. Not required for ciliary assembly. Its role in intraflagellar transport is mainly seen in tissues rich in ciliated cells such as kidney and testis. Essential for male fertility, spermiogenesis and sperm flagella formation. Plays a role in the early development of the kidney. May be involved in the regulation of ureteric bud initiation. This is Intraflagellar transport protein 25 homolog from Homo sapiens (Human).